Here is a 37-residue protein sequence, read N- to C-terminus: uncharacterized protein (37 aa).

This is an uncharacterized protein from Bacillus caldotenax.